The chain runs to 253 residues: Geranylgeranylglyceryl phosphate synthase (253 aa).

2 residues coordinate Mg(2+): D23 and S52. Residues 171-177 (YFEAGSG), 202-203 (GG), and 224-225 (GT) each bind sn-glycerol 1-phosphate.

This sequence belongs to the GGGP/HepGP synthase family. Group II subfamily. As to quaternary structure, homodimer. Requires Mg(2+) as cofactor.

The protein resides in the cytoplasm. It carries out the reaction sn-glycerol 1-phosphate + (2E,6E,10E)-geranylgeranyl diphosphate = sn-3-O-(geranylgeranyl)glycerol 1-phosphate + diphosphate. Its pathway is membrane lipid metabolism; glycerophospholipid metabolism. Inhibited by high concentrations of magnesium (&gt;10 mM) and by EDTA in vitro. In terms of biological role, prenyltransferase that catalyzes the transfer of the geranylgeranyl moiety of geranylgeranyl diphosphate (GGPP) to the C3 hydroxyl of sn-glycerol-1-phosphate (G1P). This reaction is the first ether-bond-formation step in the biosynthesis of archaeal membrane lipids. Cannot use sn-glycerol-3-phosphate (G3P) as substrate. The sequence is that of Geranylgeranylglyceryl phosphate synthase from Thermoplasma acidophilum (strain ATCC 25905 / DSM 1728 / JCM 9062 / NBRC 15155 / AMRC-C165).